Reading from the N-terminus, the 152-residue chain is UPF0178 protein NIS_0137 (152 aa).

This sequence belongs to the UPF0178 family.

This chain is UPF0178 protein NIS_0137, found in Nitratiruptor sp. (strain SB155-2).